A 170-amino-acid polypeptide reads, in one-letter code: Peptidyl-prolyl cis-trans isomerase-like 3 (170 aa).

Positions 1–160 (MSVTLHTDLG…QEFRIKSVTI (160 aa)) constitute a PPIase cyclophilin-type domain.

This sequence belongs to the cyclophilin-type PPIase family. PPIL3 subfamily.

The enzyme catalyses [protein]-peptidylproline (omega=180) = [protein]-peptidylproline (omega=0). In terms of biological role, PPIases accelerate the folding of proteins. It catalyzes the cis-trans isomerization of proline imidic peptide bonds in oligopeptides. This chain is Peptidyl-prolyl cis-trans isomerase-like 3 (cyp4), found in Rhizopus delemar (strain RA 99-880 / ATCC MYA-4621 / FGSC 9543 / NRRL 43880) (Mucormycosis agent).